The sequence spans 1220 residues: Osmosensing histidine protein kinase SLN1 (1220 aa).

At 1 to 22 (MRFGLPSKLELTPPFRIGIRTQ) the chain is on the cytoplasmic side. A helical membrane pass occupies residues 23-46 (LTALVSIVALGSLIILAVTTGVYF). Topologically, residues 47–333 (TSNYKNLRSD…FLSPATKLAK (287 aa)) are extracellular. 6 N-linked (GlcNAc...) asparagine glycosylation sites follow: asparagine 100, asparagine 138, asparagine 142, asparagine 181, asparagine 224, and asparagine 272. Residues 334 to 354 (IITGTVIAIGVFVILLTLPLA) traverse the membrane as a helical segment. At 355–1220 (HWAVQPIVRL…AAYQGKKNNK (866 aa)) the chain is on the cytoplasmic side. 2 disordered regions span residues 414-433 (GSTT…GAAF) and 444-500 (NLGN…HILT). Over residues 451–468 (SPPEEENKIPNNHTDAKI) the composition is skewed to basic and acidic residues. Phosphoserine is present on serine 502. In terms of domain architecture, Histidine kinase spans 573–928 (NISHELRTPL…KFTFTLPLNQ (356 aa)). At histidine 576 the chain carries Phosphohistidine; by autocatalysis. Residues serine 758 and serine 833 each carry the phosphoserine modification. Disordered regions lie at residues 960–1016 (AKSI…DNGG) and 1040–1081 (NSLS…VKDD). A compositionally biased stretch (polar residues) spans 965-984 (SRQSTSSVATPATNRSSLTN). The span at 988–1000 (PEVRSKGKHETKD) shows a compositional bias: basic and acidic residues. 2 positions are modified to phosphoserine: serine 1041 and serine 1044. Residues 1063–1075 (LQSTGTATSSRNI) show a composition bias toward polar residues. The Response regulatory domain occupies 1089 to 1210 (KILVVEDNHV…KLKTILTEFC (122 aa)). Positions 1094, 1095, 1144, and 1195 each coordinate Mg(2+). Residue aspartate 1144 is modified to 4-aspartylphosphate.

As to quaternary structure, interacts with DJP1, MOG1 and YPD1. The phosphorelay mechanism involves the sequential transfer of a phosphate group from His-576 (H1) in the histidine kinase domain (transmitter domain) to Asp-1144 (D1) of the response regulatory domain (receiver domain). This transfer probably occurs between two SLN1 molecules, rather than intramolecularly. The phosphate group is further transferred to 'His-64' (H2) of YPD1 and finally to 'Asp-554' (D2) of SSK1 or 'Asp-427' (D2) of SKN7.

The protein resides in the cell membrane. The enzyme catalyses ATP + protein L-histidine = ADP + protein N-phospho-L-histidine.. Histidine kinase that acts as an osmosensor at the plasma membrane. Part of the bifurcated SLN1-YPD1-SKN7/SSK1 two-component regulatory system, which controls activity of the HOG1 pathway and gene expression in response to changes in the osmolarity of the extracellular environment. Under normal osmotic conditions, the histidine kinase autophosphorylates His-576. This phosphate is subsequently transferred to Asp-1144, from where it is relayed to 'His-64' of the phosphorelay intermediate protein YPD1. Under high osmolarity conditions, the histidine kinase is no longer active. This Saccharomyces cerevisiae (strain ATCC 204508 / S288c) (Baker's yeast) protein is Osmosensing histidine protein kinase SLN1 (SLN1).